Here is a 345-residue protein sequence, read N- to C-terminus: Phosphate acyltransferase (345 aa).

Belongs to the PlsX family. Homodimer. Probably interacts with PlsY.

It localises to the cytoplasm. The enzyme catalyses a fatty acyl-[ACP] + phosphate = an acyl phosphate + holo-[ACP]. It functions in the pathway lipid metabolism; phospholipid metabolism. Catalyzes the reversible formation of acyl-phosphate (acyl-PO(4)) from acyl-[acyl-carrier-protein] (acyl-ACP). This enzyme utilizes acyl-ACP as fatty acyl donor, but not acyl-CoA. The protein is Phosphate acyltransferase of Dichelobacter nodosus (strain VCS1703A).